We begin with the raw amino-acid sequence, 351 residues long: N-acetyl-gamma-glutamyl-phosphate reductase (351 aa).

Residue cysteine 154 is part of the active site.

The protein belongs to the NAGSA dehydrogenase family. Type 1 subfamily.

Its subcellular location is the cytoplasm. The catalysed reaction is N-acetyl-L-glutamate 5-semialdehyde + phosphate + NADP(+) = N-acetyl-L-glutamyl 5-phosphate + NADPH + H(+). It functions in the pathway amino-acid biosynthesis; L-arginine biosynthesis; N(2)-acetyl-L-ornithine from L-glutamate: step 3/4. Functionally, catalyzes the NADPH-dependent reduction of N-acetyl-5-glutamyl phosphate to yield N-acetyl-L-glutamate 5-semialdehyde. The sequence is that of N-acetyl-gamma-glutamyl-phosphate reductase from Synechocystis sp. (strain ATCC 27184 / PCC 6803 / Kazusa).